The primary structure comprises 291 residues: START domain-containing protein 10 (291 aa).

M1 bears the N-acetylmethionine mark. The interval M1–Q23 is disordered. The 211-residue stretch at R14–E224 folds into the START domain. 3 positions are modified to N6-succinyllysine: K94, K197, and K202. Phosphoserine occurs at positions 253, 259, 284, and 289. The interval L260–T291 is disordered.

Post-translationally, phosphorylation at Ser-284 by CK2 negatively regulates lipid transfer activity, possibly by decreasing membrane association. As to expression, testis, kidney, liver, and intestine with the highest level in the testis.

It localises to the cell projection. The protein resides in the cilium. It is found in the flagellum. The protein localises to the cytoplasm. Its subcellular location is the membrane. Its function is as follows. Phospholipid transfer protein that preferentially selects lipid species containing a palmitoyl or stearoyl chain on the sn-1 and an unsaturated fatty acyl chain (18:1 or 18:2) on the sn-2 position. Able to transfer phosphatidylcholine (PC) and phosphatidyetanolamline (PE) between membranes. May play metabolic roles in sperm maturation or fertilization. The sequence is that of START domain-containing protein 10 (Stard10) from Mus musculus (Mouse).